The chain runs to 277 residues: Large ribosomal subunit protein uL2 (277 aa).

Positions 218–277 (PTVRGSVMNPNDHPHGGGEGKSPIGHPSPLTPWGKPALGYKTRKNKKYSDGMIIKRRGQK) are disordered.

It belongs to the universal ribosomal protein uL2 family. As to quaternary structure, part of the 50S ribosomal subunit. Forms a bridge to the 30S subunit in the 70S ribosome.

In terms of biological role, one of the primary rRNA binding proteins. Required for association of the 30S and 50S subunits to form the 70S ribosome, for tRNA binding and peptide bond formation. It has been suggested to have peptidyltransferase activity; this is somewhat controversial. Makes several contacts with the 16S rRNA in the 70S ribosome. This Clostridium novyi (strain NT) protein is Large ribosomal subunit protein uL2.